Here is a 177-residue protein sequence, read N- to C-terminus: Alpha-crystallin A chain (177 aa).

Met-1 carries the post-translational modification N-acetylmethionine. The sHSP domain occupies 52–162 (VFRNFLDSGI…NWQDRPIPVS (111 aa)). Residues His-100 and Glu-102 each contribute to the Zn(2+) site. The cysteines at positions 131 and 142 are disulfide-linked. The tract at residues 146-177 (TRPGDDSNWQDRPIPVSREEKQGTQPEIRADP) is disordered. The O-linked (GlcNAc) serine glycan is linked to Ser-162. A compositionally biased stretch (basic and acidic residues) spans 162 to 177 (SREEKQGTQPEIRADP).

Belongs to the small heat shock protein (HSP20) family. Heteropolymer composed of three CRYAA and one CRYAB subunits. Inter-subunit bridging via zinc ions enhances stability, which is crucial as there is no protein turn over in the lens. Can also form homodimers and homotetramers (dimers of dimers) which serve as the building blocks of homooligomers.

It is found in the cytoplasm. The protein localises to the nucleus. Functionally, contributes to the transparency and refractive index of the lens. May act as a chaperone, preventing aggregation of various proteins under a wide range of stress conditions. The sequence is that of Alpha-crystallin A chain (cryaa) from Squalus acanthias (Spiny dogfish).